Consider the following 315-residue polypeptide: MSDSLRIIFAGTPDFAARHLGALLSSQHQIVGVFTQPDRPAGRGNKLTPSPVKVLAEQHDIPIFQPKSLRPEENQHLVADLNADIMVVVAYGLILPASVLAMPRLGCINVHGSLLPRWRGAAPIQRSLWAGDAKTGVTIMQMDVGLDTGDMLHKIECDIQPEDTSATLYDKLAQLGPQGLLVTLQQLAEGSAQPEVQDEAQVTYAEKLSKEEAKLDWSLSAVQLERCIRAFNPWPVSYFVVDEQPIKVWQAQVLATVDNAAPGTIIHADKHGIQVATADGVLNITQLQPAGKKAMSAADLLNSRREWFTLGNQLA.

113–116 (SLLP) is a binding site for (6S)-5,6,7,8-tetrahydrofolate.

Belongs to the Fmt family.

It catalyses the reaction L-methionyl-tRNA(fMet) + (6R)-10-formyltetrahydrofolate = N-formyl-L-methionyl-tRNA(fMet) + (6S)-5,6,7,8-tetrahydrofolate + H(+). Functionally, attaches a formyl group to the free amino group of methionyl-tRNA(fMet). The formyl group appears to play a dual role in the initiator identity of N-formylmethionyl-tRNA by promoting its recognition by IF2 and preventing the misappropriation of this tRNA by the elongation apparatus. The chain is Methionyl-tRNA formyltransferase from Yersinia enterocolitica serotype O:8 / biotype 1B (strain NCTC 13174 / 8081).